The primary structure comprises 156 residues: Putative pre-16S rRNA nuclease (156 aa).

It belongs to the YqgF nuclease family.

It localises to the cytoplasm. Functionally, could be a nuclease involved in processing of the 5'-end of pre-16S rRNA. The sequence is that of Putative pre-16S rRNA nuclease from Streptomyces avermitilis (strain ATCC 31267 / DSM 46492 / JCM 5070 / NBRC 14893 / NCIMB 12804 / NRRL 8165 / MA-4680).